A 197-amino-acid chain; its full sequence is uncharacterized protein (197 aa).

The disordered stretch occupies residues 1–135; the sequence is MKTPWKFLAR…ERGKRANARV (135 aa). The segment covering 14–32 has biased composition (polar residues); it reads RQPSGKTQESSAGNDTGSK. A compositionally biased stretch (basic and acidic residues) spans 83-96; the sequence is IHADEAQTTARDEA. The segment covering 116–132 has biased composition (basic residues); the sequence is SQRKPRIKRRERGKRAN.

The protein to Rhizobium NGR234A y4nF and y4aO.

This is an uncharacterized protein from Rhizobium meliloti (strain 1021) (Ensifer meliloti).